The primary structure comprises 86 residues: MIPAVVLLLLLLVEQAAALGEPQLCYILDAILFLYGIVLTLLYCRLKIQVRKAAIASYEKSDGVYTGLSTRNQETYETLKHEKPPQ.

The signal sequence occupies residues 1-18 (MIPAVVLLLLLLVEQAAA). At 19–23 (LGEPQ) the chain is on the extracellular side. Residues 24–44 (LCYILDAILFLYGIVLTLLYC) form a helical membrane-spanning segment. Residues 45 to 86 (RLKIQVRKAAIASYEKSDGVYTGLSTRNQETYETLKHEKPPQ) are Cytoplasmic-facing. Residues 54–82 (AIASYEKSDGVYTGLSTRNQETYETLKHE) form the ITAM domain. Position 65 is a phosphotyrosine (tyrosine 65). At serine 69 the chain carries Phosphoserine. Tyrosine 76 carries the phosphotyrosine modification. Threonine 78 carries the post-translational modification Phosphothreonine.

Belongs to the CD3Z/FCER1G family. IgE Fc receptor is a tetramer of an alpha chain, a beta chain, and two disulfide linked gamma chains. Associates with FCGR1A; forms a functional signaling complex. The signaling subunit of immunoglobulin gamma (IgG) Fc receptor complex. As a homodimer or a heterodimer of CD247 and FCER1G, associates with the ligand binding subunit FCGR3A to form a functional receptor complex. Associates with CLEC6A. Interacts with CLEC4E. Interacts (via ITAM domain) with SYK (via SH2 domains); activates SYK, enabling integrin-mediated activation of neutrophils and macrophages. Interacts with CSF2RB and recruits SYK in response to IL3 stimulation; this interaction is direct. Interacts with CD300LH; the interaction may be indirect. Interacts with CD300LD. Interacts with TARM1.

The protein resides in the cell membrane. Functionally, adapter protein containing an immunoreceptor tyrosine-based activation motif (ITAM) that transduces activation signals from various immunoreceptors. As a component of the high-affinity immunoglobulin E (IgE) receptor, mediates allergic inflammatory signaling in mast cells. As a constitutive component of interleukin-3 receptor complex, selectively mediates interleukin 4/IL4 production by basophils priming T-cells toward effector T-helper 2 subset. Associates with pattern recognition receptors CLEC4D and CLEC4E to form a functional signaling complex in myeloid cells. Binding of mycobacterial trehalose 6,6'-dimycolate (TDM) to this receptor complex leads to phosphorylation of ITAM, triggering activation of SYK, CARD9 and NF-kappa-B, consequently driving maturation of antigen-presenting cells and shaping antigen-specific priming of T-cells toward effector T-helper 1 and T-helper 17 cell subtypes. May function cooperatively with other activating receptors. Functionally linked to integrin beta-2/ITGB2-mediated neutrophil activation. Also involved in integrin alpha-2/ITGA2-mediated platelet activation. The sequence is that of High affinity immunoglobulin epsilon receptor subunit gamma (FCER1G) from Macaca fascicularis (Crab-eating macaque).